A 269-amino-acid chain; its full sequence is HTH-type transcriptional activator ArnR (269 aa).

Residues 1–218 (MTKSLFDVLK…LLRLTNSYTL (218 aa)) lie on the Cytoplasmic side of the membrane. A DNA-binding region (H-T-H motif) is located at residues 39–62 (TTEISQTINTSRKSIIDAIRKLVD). A helical transmembrane segment spans residues 219 to 239 (EMANVKVMGFILISLPLLMYF). Residues 240–242 (RDQ) lie on the Extracellular side of the membrane. The chain crosses the membrane as a helical span at residues 243–263 (LGLIELPWLYAVIFLALLSVF). Residues 264–269 (AQILSR) lie on the Cytoplasmic side of the membrane.

It is found in the cell membrane. Functionally, involved in regulation of archaellar gene expression. Activates flaB transcription upon nutrient starvation by acting on the flaB promoter. In Sulfolobus acidocaldarius (strain ATCC 33909 / DSM 639 / JCM 8929 / NBRC 15157 / NCIMB 11770), this protein is HTH-type transcriptional activator ArnR.